Consider the following 433-residue polypeptide: Cyclin-dependent kinase F-3 (433 aa).

The Protein kinase domain maps to 4 to 283 (YKVIREIGDG…AEQSLQHPFF (280 aa)). ATP-binding positions include 10 to 18 (IGDGTCGNV) and lysine 33. The active-site Proton acceptor is aspartate 125. Serine 151 carries the post-translational modification Phosphoserine. The residue at position 156 (threonine 156) is a Phosphothreonine.

Belongs to the protein kinase superfamily. CMGC Ser/Thr protein kinase family. CDC2/CDKX subfamily.

The enzyme catalyses L-seryl-[protein] + ATP = O-phospho-L-seryl-[protein] + ADP + H(+). It catalyses the reaction L-threonyl-[protein] + ATP = O-phospho-L-threonyl-[protein] + ADP + H(+). It carries out the reaction [DNA-directed RNA polymerase] + ATP = phospho-[DNA-directed RNA polymerase] + ADP + H(+). The sequence is that of Cyclin-dependent kinase F-3 (CDKF-3) from Oryza sativa subsp. japonica (Rice).